The chain runs to 195 residues: Imidazoleglycerol-phosphate dehydratase (195 aa).

Belongs to the imidazoleglycerol-phosphate dehydratase family.

It is found in the cytoplasm. The catalysed reaction is D-erythro-1-(imidazol-4-yl)glycerol 3-phosphate = 3-(imidazol-4-yl)-2-oxopropyl phosphate + H2O. It participates in amino-acid biosynthesis; L-histidine biosynthesis; L-histidine from 5-phospho-alpha-D-ribose 1-diphosphate: step 6/9. The sequence is that of Imidazoleglycerol-phosphate dehydratase from Bordetella bronchiseptica (strain ATCC BAA-588 / NCTC 13252 / RB50) (Alcaligenes bronchisepticus).